A 316-amino-acid polypeptide reads, in one-letter code: 4-hydroxy-3-methylbut-2-enyl diphosphate reductase (316 aa).

Cys12 is a binding site for [4Fe-4S] cluster. (2E)-4-hydroxy-3-methylbut-2-enyl diphosphate-binding residues include His41 and His74. Positions 41 and 74 each coordinate dimethylallyl diphosphate. Isopentenyl diphosphate contacts are provided by His41 and His74. Cys96 is a binding site for [4Fe-4S] cluster. Residue His124 coordinates (2E)-4-hydroxy-3-methylbut-2-enyl diphosphate. His124 contributes to the dimethylallyl diphosphate binding site. His124 contributes to the isopentenyl diphosphate binding site. Glu126 functions as the Proton donor in the catalytic mechanism. Thr167 contacts (2E)-4-hydroxy-3-methylbut-2-enyl diphosphate. Cys197 lines the [4Fe-4S] cluster pocket. (2E)-4-hydroxy-3-methylbut-2-enyl diphosphate contacts are provided by Ser225, Ser226, Asn227, and Ser269. The dimethylallyl diphosphate site is built by Ser225, Ser226, Asn227, and Ser269. Positions 225, 226, 227, and 269 each coordinate isopentenyl diphosphate.

This sequence belongs to the IspH family. Homodimer. The cofactor is [4Fe-4S] cluster.

The enzyme catalyses isopentenyl diphosphate + 2 oxidized [2Fe-2S]-[ferredoxin] + H2O = (2E)-4-hydroxy-3-methylbut-2-enyl diphosphate + 2 reduced [2Fe-2S]-[ferredoxin] + 2 H(+). It catalyses the reaction dimethylallyl diphosphate + 2 oxidized [2Fe-2S]-[ferredoxin] + H2O = (2E)-4-hydroxy-3-methylbut-2-enyl diphosphate + 2 reduced [2Fe-2S]-[ferredoxin] + 2 H(+). It participates in isoprenoid biosynthesis; dimethylallyl diphosphate biosynthesis; dimethylallyl diphosphate from (2E)-4-hydroxy-3-methylbutenyl diphosphate: step 1/1. It functions in the pathway isoprenoid biosynthesis; isopentenyl diphosphate biosynthesis via DXP pathway; isopentenyl diphosphate from 1-deoxy-D-xylulose 5-phosphate: step 6/6. In terms of biological role, catalyzes the conversion of 1-hydroxy-2-methyl-2-(E)-butenyl 4-diphosphate (HMBPP) into a mixture of isopentenyl diphosphate (IPP) and dimethylallyl diphosphate (DMAPP). Acts in the terminal step of the DOXP/MEP pathway for isoprenoid precursor biosynthesis. The protein is 4-hydroxy-3-methylbut-2-enyl diphosphate reductase of Salmonella schwarzengrund (strain CVM19633).